The primary structure comprises 177 residues: Prorelaxin (177 aa).

A signal peptide spans 1-22 (MSCKFVLQLLGFWLLLSQPCRA). Intrachain disulfides connect C36-C164, C48-C177, and C163-C168. The propeptide at 64–149 (MTEEAVSSFI…LKSLYLDTLS (86 aa)) is connecting peptide. The disordered stretch occupies residues 80-114 (FDTMPNLSEKPKTALPEGHPSLPEQQQYVPVSSDS). Residues 102–114 (PEQQQYVPVSSDS) are compositionally biased toward polar residues.

This sequence belongs to the insulin family. Heterodimer of a B chain and an A chain linked by two disulfide bonds.

It is found in the secreted. In terms of biological role, relaxin is an ovarian hormone that acts with estrogen to produce dilatation of the birth canal in many mammals. It bears mature young, and allows separation of the pelvic bones. This chain is Prorelaxin (RLN), found in Mesocricetus auratus (Golden hamster).